A 459-amino-acid polypeptide reads, in one-letter code: Plasma alpha-L-fucosidase (459 aa).

An N-terminal signal peptide occupies residues 1 to 23 (MRLGLLMFLPLLLLATRYRAVTA). N-linked (GlcNAc...) asparagine glycosylation is found at N163 and N231. The residue at position 293 (S293) is a Phosphoserine. N-linked (GlcNAc...) asparagine glycosylation occurs at N369.

The protein belongs to the glycosyl hydrolase 29 family. Homotetramer.

The protein localises to the secreted. The catalysed reaction is an alpha-L-fucoside + H2O = L-fucose + an alcohol. Alpha-L-fucosidase is responsible for hydrolyzing the alpha-1,6-linked fucose joined to the reducing-end N-acetylglucosamine of the carbohydrate moieties of glycoproteins. In Rattus norvegicus (Rat), this protein is Plasma alpha-L-fucosidase (Fuca2).